A 404-amino-acid chain; its full sequence is Immediate early response gene 5-like protein (404 aa).

Disordered stretches follow at residues 86–107 (AADF…EPAA), 160–231 (AALQ…APAS), and 308–327 (QEEE…EPPG). The segment covering 177 to 194 (PLQPGPAPLPLPLPPPAP) has biased composition (pro residues). The span at 195–231 (AALCPRDPRAPAACSAPPGAAPPAAAASPPASPAPAS) shows a compositional bias: low complexity. A compositionally biased stretch (acidic residues) spans 308 to 318 (QEEEEDDEEDA).

The protein belongs to the IER family.

The chain is Immediate early response gene 5-like protein (IER5L) from Homo sapiens (Human).